Here is a 415-residue protein sequence, read N- to C-terminus: Dynein assembly factor with WD repeat domains 1 (415 aa).

8 WD repeats span residues Ala-90–Thr-129, Gly-132–Arg-174, Gly-175–Thr-214, Gly-217–Ile-256, Gly-259–Thr-298, Gly-301–Lys-340, Gly-343–Glu-384, and His-386–Arg-415.

It belongs to the WD repeat WDR69 family. Interacts with IFT46.

The protein resides in the cytoplasm. It is found in the cytoskeleton. It localises to the flagellum basal body. The protein localises to the flagellum axoneme. Required for axonemal dynein assembly and ciliary motility in ciliated organs, including Kupffer's vesicle, during embryogenesis. Facilitates the onset of robust cilia motility during development. This is Dynein assembly factor with WD repeat domains 1 from Homo sapiens (Human).